A 464-amino-acid chain; its full sequence is Keratin, type I cytoskeletal 28 (464 aa).

The interval methionine 1–asparagine 85 is head. Residues glutamate 86 to tryptophan 121 are coil 1A. The IF rod domain maps to glutamate 86–cysteine 401. Positions tyrosine 122–threonine 143 are linker 1. Residues isoleucine 144–leucine 235 are coil 1B. The interval glutamine 236–leucine 258 is linker 12. The segment at leucine 259 to aspartate 397 is coil 2. Residues glycine 398–phenylalanine 464 are tail. The disordered stretch occupies residues isoleucine 443–phenylalanine 464.

It belongs to the intermediate filament family. Heterotetramer of two type I and two type II keratins. In terms of tissue distribution, strongly expressed in skin and scalp, and weak expression observed in thymus. In the hair follicle, expressed in Henle layer, Huxley layer and in the irs cuticle. Expression extends from the bulb region up to the point of differentiation into the three layers. Also present in the medulla of beard hair (at protein level).

It localises to the cytoplasm. Functionally, essential for the proper assembly of types I and II keratin protein complexes and the formation of keratin intermediate filaments in the inner root sheath (irs). This chain is Keratin, type I cytoskeletal 28, found in Homo sapiens (Human).